Here is a 197-residue protein sequence, read N- to C-terminus: uncharacterized protein (197 aa).

Positions 1–19 are cleaved as a signal peptide; that stretch reads MKLASLLVGSLMLAVPALA.

Its subcellular location is the secreted. This is an uncharacterized protein from Arthroderma benhamiae (strain ATCC MYA-4681 / CBS 112371) (Trichophyton mentagrophytes).